The primary structure comprises 368 residues: Ubiquitin domain-containing protein UBFD1 (368 aa).

The interval Ser106 to Gly139 is disordered. Residues Glu143–Asp218 form the Ubiquitin-like domain. The interval Gln231–Pro263 is disordered. 2 stretches are compositionally biased toward basic and acidic residues: residues Ala233–Cys244 and Lys251–Asp260.

The sequence is that of Ubiquitin domain-containing protein UBFD1 (Ubfd1) from Mus musculus (Mouse).